Here is a 387-residue protein sequence, read N- to C-terminus: Trichocyst matrix protein T2-C (387 aa).

The first 19 residues, 1 to 19, serve as a signal peptide directing secretion; it reads MKTIILALALIVLASSTQA. Residues 20–48 constitute a propeptide that is removed on maturation; it reads DVIATIKKIDQSPFGRTLFDTIWLELQTG. Residues 51 to 163 are a coiled coil; it reads LDRLLQTLTD…KVLEHQEATA (113 aa). A propeptide spanning residues 184–239 is cleaved from the precursor; sequence KGKATKQPAHKFTKEVASMIQKHFTTSAKKAAKFQHRKGYSKLFKAFATIASKVEQ. The stretch at 294-333 forms a coiled coil; it reads TALANAQSDLAALNDVIAQVEASLDTTNQRIENVSADRND.

The protein belongs to the TMP family. Post-translationally, two components are produced by post-translational processing from the precursor peptide.

The protein localises to the trichocyst. In terms of biological role, structural protein that crystallize inside the trichocyst matrix. This chain is Trichocyst matrix protein T2-C (T2C), found in Paramecium tetraurelia.